We begin with the raw amino-acid sequence, 70 residues long: Ranatuerin-2SN1 (70 aa).

Residues 1 to 22 form the signal peptide; that stretch reads MFTLKKSLLLIFFLGTISLSLC. The propeptide at 23–40 is removed in mature form; that stretch reads EKERDADDDEVEVIKQEE. A disulfide bridge connects residues C65 and C70.

It belongs to the frog skin active peptide (FSAP) family. Ranatuerin subfamily. Expressed by the skin glands.

The protein resides in the secreted. Functionally, antimicrobial peptide. Weakly active against P.faecalis X29. Not active against fungi. Shows very weak hemolytic activity against human erythrocytes. This chain is Ranatuerin-2SN1, found in Sylvirana spinulosa (Fine-spined frog).